The following is a 661-amino-acid chain: L-type lectin-domain containing receptor kinase V.5 (661 aa).

Residues 1–25 form the signal peptide; the sequence is MSRELIILCQPILVLFLTLFYNSHG. Residues 26 to 282 lie on the Extracellular side of the membrane; it reads YFVSQGSVGI…KTSNRTKTVL (257 aa). A legume-lectin like region spans residues 30–250; it reads QGSVGIGFNG…GAIHYLMGWL (221 aa). Residues Asn-45, Asn-64, Asn-116, Asn-198, and Asn-276 are each glycosylated (N-linked (GlcNAc...) asparagine). The helical transmembrane segment at 283 to 303 threads the bilayer; that stretch reads AVCLTVSVFAAFVASWIGFVF. Over 304–661 the chain is Cytoplasmic; sequence YLRHKKVKEV…TDSSFVSHGR (358 aa). The Protein kinase domain maps to 338 to 596; sequence FKEKQLLGKG…LGVLCSHQAA (259 aa). ATP is bound by residues 344-352 and Lys-367; that span reads LGKGGFGQV. Residue Asp-464 is the Proton acceptor of the active site.

The protein in the C-terminal section; belongs to the protein kinase superfamily. Ser/Thr protein kinase family. It in the N-terminal section; belongs to the leguminous lectin family. Autophosphorylated on a Ser residue. Expressed at low levels in stems, leaves, flowers and siliques.

Its subcellular location is the cell membrane. It catalyses the reaction L-seryl-[protein] + ATP = O-phospho-L-seryl-[protein] + ADP + H(+). It carries out the reaction L-threonyl-[protein] + ATP = O-phospho-L-threonyl-[protein] + ADP + H(+). Functionally, confers resistance to the pathogenic oomycetes Phytophthora infestans and Phytophthora capsici, but confers susceptibility to the pathogenic bacteria Pseudomonas syringae. The polypeptide is L-type lectin-domain containing receptor kinase V.5 (Arabidopsis thaliana (Mouse-ear cress)).